The primary structure comprises 1139 residues: uncharacterized protein (1139 aa).

This sequence belongs to the IIV-6 295L family.

This is an uncharacterized protein from Aedes vexans (Inland floodwater mosquito).